A 385-amino-acid polypeptide reads, in one-letter code: uncharacterized protein (385 aa).

Lysine 194 is subject to N6-(pyridoxal phosphate)lysine.

It belongs to the class-V pyridoxal-phosphate-dependent aminotransferase family. It depends on pyridoxal 5'-phosphate as a cofactor.

This is an uncharacterized protein from Methanocaldococcus jannaschii (strain ATCC 43067 / DSM 2661 / JAL-1 / JCM 10045 / NBRC 100440) (Methanococcus jannaschii).